The primary structure comprises 126 residues: Nascent polypeptide-associated complex protein (126 aa).

The NAC-A/B domain occupies 10 to 77; it reads PRMMKQMQKM…AKKVAKAEEK (68 aa).

The protein belongs to the NAC-alpha family. Homodimer. Interacts with the ribosome. Binds ribosomal RNA.

Its function is as follows. Contacts the emerging nascent chain on the ribosome. The polypeptide is Nascent polypeptide-associated complex protein (Methanococcus maripaludis (strain C6 / ATCC BAA-1332)).